The chain runs to 365 residues: Peptide chain release factor 2 (365 aa).

Glutamine 249 bears the N5-methylglutamine mark.

Belongs to the prokaryotic/mitochondrial release factor family. Methylated by PrmC. Methylation increases the termination efficiency of RF2.

The protein resides in the cytoplasm. Its function is as follows. Peptide chain release factor 2 directs the termination of translation in response to the peptide chain termination codons UGA and UAA. This Acholeplasma laidlawii (strain PG-8A) protein is Peptide chain release factor 2.